Here is a 333-residue protein sequence, read N- to C-terminus: Transaldolase (333 aa).

The active-site Schiff-base intermediate with substrate is Lys-135.

The protein belongs to the transaldolase family. Type 1 subfamily. As to quaternary structure, homodimer.

It localises to the cytoplasm. The catalysed reaction is D-sedoheptulose 7-phosphate + D-glyceraldehyde 3-phosphate = D-erythrose 4-phosphate + beta-D-fructose 6-phosphate. It participates in carbohydrate degradation; pentose phosphate pathway; D-glyceraldehyde 3-phosphate and beta-D-fructose 6-phosphate from D-ribose 5-phosphate and D-xylulose 5-phosphate (non-oxidative stage): step 2/3. Its function is as follows. Transaldolase is important for the balance of metabolites in the pentose-phosphate pathway. The sequence is that of Transaldolase from Prochlorococcus marinus (strain MIT 9312).